Consider the following 159-residue polypeptide: Eukaryotic translation initiation factor 5A (159 aa).

Lys55 bears the Hypusine mark.

It belongs to the eIF-5A family. In terms of processing, lys-55 undergoes hypusination, a unique post-translational modification that consists in the addition of a butylamino group from spermidine to lysine side chain, leading to the formation of the unusual amino acid hypusine. eIF-5As are the only known proteins to undergo this modification, which is essential for their function.

It is found in the cytoplasm. In terms of biological role, translation factor that promotes translation elongation and termination, particularly upon ribosome stalling at specific amino acid sequence contexts. Binds between the exit (E) and peptidyl (P) site of the ribosome and promotes rescue of stalled ribosome: specifically required for efficient translation of polyproline-containing peptides as well as other motifs that stall the ribosome. Acts as a ribosome quality control (RQC) cofactor by joining the RQC complex to facilitate peptidyl transfer during CAT tailing step. In Dictyostelium discoideum (Social amoeba), this protein is Eukaryotic translation initiation factor 5A (eif5a).